The following is a 341-amino-acid chain: UDP-3-O-acylglucosamine N-acyltransferase (341 aa).

The active-site Proton acceptor is the H237.

Belongs to the transferase hexapeptide repeat family. LpxD subfamily. As to quaternary structure, homotrimer.

It catalyses the reaction a UDP-3-O-[(3R)-3-hydroxyacyl]-alpha-D-glucosamine + a (3R)-hydroxyacyl-[ACP] = a UDP-2-N,3-O-bis[(3R)-3-hydroxyacyl]-alpha-D-glucosamine + holo-[ACP] + H(+). It functions in the pathway bacterial outer membrane biogenesis; LPS lipid A biosynthesis. Functionally, catalyzes the N-acylation of UDP-3-O-acylglucosamine using 3-hydroxyacyl-ACP as the acyl donor. Is involved in the biosynthesis of lipid A, a phosphorylated glycolipid that anchors the lipopolysaccharide to the outer membrane of the cell. The sequence is that of UDP-3-O-acylglucosamine N-acyltransferase from Azoarcus sp. (strain BH72).